Here is a 185-residue protein sequence, read N- to C-terminus: Peptidyl-tRNA hydrolase (185 aa).

TRNA is bound at residue Tyr14. The active-site Proton acceptor is the His19. Positions 64, 66, and 112 each coordinate tRNA.

This sequence belongs to the PTH family. In terms of assembly, monomer.

It localises to the cytoplasm. It catalyses the reaction an N-acyl-L-alpha-aminoacyl-tRNA + H2O = an N-acyl-L-amino acid + a tRNA + H(+). Its function is as follows. Hydrolyzes ribosome-free peptidyl-tRNAs (with 1 or more amino acids incorporated), which drop off the ribosome during protein synthesis, or as a result of ribosome stalling. In terms of biological role, catalyzes the release of premature peptidyl moieties from peptidyl-tRNA molecules trapped in stalled 50S ribosomal subunits, and thus maintains levels of free tRNAs and 50S ribosomes. The protein is Peptidyl-tRNA hydrolase of Lactobacillus gasseri (strain ATCC 33323 / DSM 20243 / BCRC 14619 / CIP 102991 / JCM 1131 / KCTC 3163 / NCIMB 11718 / NCTC 13722 / AM63).